The chain runs to 721 residues: Vacuolar transporter chaperone complex subunit 4 (721 aa).

In terms of domain architecture, SPX spans 1 to 146; the sequence is MKFGQLLKET…GWILKPVFAA (146 aa). Residues 1–631 are Cytoplasmic-facing; sequence MKFGQLLKET…KTYFALERTY (631 aa). 7 residues coordinate ATP: Lys-198, Arg-262, Arg-264, Lys-279, Lys-292, Tyr-357, and Arg-359. Glu-421 contributes to the Mn(2+) binding site. Lys-453 is an active-site residue. Polar residues-rich tracts occupy residues 490-513 and 529-547; these read QGRSQSGTHSSSVSANVLTDSENT and IGSSSTRNDNSTFQTSDSF. The tract at residues 490–547 is disordered; sequence QGRSQSGTHSSSVSANVLTDSENTPIHADGDNYVDEESRIGSSSTRNDNSTFQTSDSF. Ser-495 bears the Phosphoserine mark. Residue Thr-497 is modified to Phosphothreonine. Residue Ser-501 is modified to Phosphoserine. Thr-534 is subject to Phosphothreonine. Phosphoserine is present on Ser-546. A helical transmembrane segment spans residues 632–652; the sequence is LDYLRYSILMGSIGITLFSFA. Over 653–657 the chain is Vacuolar; the sequence is KTRSG. Residues 658–678 traverse the membrane as a helical segment; it reads ILGAASFTLVALFAIFYSTFL. Topologically, residues 679–697 are cytoplasmic; sequence YLWRAVNIAKHNAVRYDDR. A helical membrane pass occupies residues 698 to 718; the sequence is FGPTAICVITFAAISANVILN. Residues 719 to 721 are Vacuolar-facing; the sequence is FNA.

The protein belongs to the VTC4 family. As to quaternary structure, the VTC core complex is an integral membrane heterooligomer composed of at least the catalytic subunit vtc4 and the accessory subunits vtc1 and vtc2. vtc1 is a small membrane protein without hydrophilic domain. Vtc2 and vtc4 are related and have 2 hydrophilic domains that face the cytosol, an N-terminal SPX domain and the central core domain. The central core in vtc4 is the catalytic domain. The cofactor is Mn(2+).

It localises to the vacuole membrane. The enzyme catalyses [phosphate](n) + ATP = [phosphate](n+1) + ADP. Activity of the enzyme is Mn(2+)-dependent and enhanced in the presence of pyrophosphate (PPi). In terms of biological role, catalytic subunit of the vacuolar transporter chaperone (VTC) complex. The VTC complex acts as a vacuolar polyphosphate polymerase that catalyzes the synthesis of inorganic polyphosphate (polyP) via transfer of phosphate from ATP to a growing polyP chain, releasing ADP. VTC exposes its catalytic domain vtc4 to the cytosol, where the growing polyP chain winds through a tunnel-shaped pocket, integrating cytoplasmic polymer synthesis with polyP membrane translocation. The VTC complex carries 9 vacuolar transmembrane domains, which are likely to constitute the translocation channel into the organelle lumen. PolyP synthesis is tightly coupled to its transport into the vacuole lumen, in order to avoid otherwise toxic intermediates in the cytosol, and it depends on the proton gradient across the membrane, formed by V-ATPase. The VTC complex also plays a role in vacuolar membrane fusion. The chain is Vacuolar transporter chaperone complex subunit 4 (vtc4) from Schizosaccharomyces pombe (strain 972 / ATCC 24843) (Fission yeast).